Reading from the N-terminus, the 191-residue chain is Phosphoheptose isomerase (191 aa).

The region spanning 37–191 (ITSSLKQGGK…LILLIEQSLL (155 aa)) is the SIS domain. 52-54 (NGG) is a binding site for substrate. Residues His-61 and Glu-65 each contribute to the Zn(2+) site. Substrate-binding positions include Glu-65, 93-94 (ND), 119-121 (STS), Ser-124, and Gln-172. Positions 172 and 180 each coordinate Zn(2+).

Belongs to the SIS family. GmhA subfamily. Requires Zn(2+) as cofactor.

The protein resides in the cytoplasm. It carries out the reaction 2 D-sedoheptulose 7-phosphate = D-glycero-alpha-D-manno-heptose 7-phosphate + D-glycero-beta-D-manno-heptose 7-phosphate. It functions in the pathway carbohydrate biosynthesis; D-glycero-D-manno-heptose 7-phosphate biosynthesis; D-glycero-alpha-D-manno-heptose 7-phosphate and D-glycero-beta-D-manno-heptose 7-phosphate from sedoheptulose 7-phosphate: step 1/1. Its function is as follows. Catalyzes the isomerization of sedoheptulose 7-phosphate in D-glycero-D-manno-heptose 7-phosphate. The chain is Phosphoheptose isomerase from Cytophaga hutchinsonii (strain ATCC 33406 / DSM 1761 / CIP 103989 / NBRC 15051 / NCIMB 9469 / D465).